We begin with the raw amino-acid sequence, 160 residues long: uncharacterized protein (160 aa).

The first 25 residues, 1–25 (MKVTLLLLLIAVLLLLLIFMKVCKQ), serve as a signal peptide directing secretion.

This is an uncharacterized protein from Invertebrate iridescent virus 6 (IIV-6).